Consider the following 317-residue polypeptide: Acetyl-coenzyme A carboxylase carboxyl transferase subunit alpha (317 aa).

The CoA carboxyltransferase C-terminal domain occupies 40 to 294 (RLQKKSEELT…KQQILADLQD (255 aa)).

Belongs to the AccA family. In terms of assembly, acetyl-CoA carboxylase is a heterohexamer composed of biotin carboxyl carrier protein (AccB), biotin carboxylase (AccC) and two subunits each of ACCase subunit alpha (AccA) and ACCase subunit beta (AccD).

The protein resides in the cytoplasm. It carries out the reaction N(6)-carboxybiotinyl-L-lysyl-[protein] + acetyl-CoA = N(6)-biotinyl-L-lysyl-[protein] + malonyl-CoA. The protein operates within lipid metabolism; malonyl-CoA biosynthesis; malonyl-CoA from acetyl-CoA: step 1/1. Component of the acetyl coenzyme A carboxylase (ACC) complex. First, biotin carboxylase catalyzes the carboxylation of biotin on its carrier protein (BCCP) and then the CO(2) group is transferred by the carboxyltransferase to acetyl-CoA to form malonyl-CoA. This is Acetyl-coenzyme A carboxylase carboxyl transferase subunit alpha from Actinobacillus pleuropneumoniae serotype 5b (strain L20).